Here is a 185-residue protein sequence, read N- to C-terminus: MRIGLYGGSFNPAHAGHLHVSRTALRRLRLDRVWWLVTPGNPLKDHGVLAPLDERVAQARALATDPRIAVTGFEGGIGSRYTADTLRWLVRRQPALHFVWIMGADSLGTFHRWRRFDEILSLMPVAVIDRPGYTLTAPSARAAQAFASARIPEADAPTLATRPTPAWAFLHGPRSALSSTALRTR.

Belongs to the NadD family.

The catalysed reaction is nicotinate beta-D-ribonucleotide + ATP + H(+) = deamido-NAD(+) + diphosphate. Its pathway is cofactor biosynthesis; NAD(+) biosynthesis; deamido-NAD(+) from nicotinate D-ribonucleotide: step 1/1. Functionally, catalyzes the reversible adenylation of nicotinate mononucleotide (NaMN) to nicotinic acid adenine dinucleotide (NaAD). The sequence is that of Probable nicotinate-nucleotide adenylyltransferase from Methylorubrum extorquens (strain CM4 / NCIMB 13688) (Methylobacterium extorquens).